The chain runs to 55 residues: Large ribosomal subunit protein bL33 (55 aa).

The protein belongs to the bacterial ribosomal protein bL33 family.

This chain is Large ribosomal subunit protein bL33, found in Dehalococcoides mccartyi (strain ATCC BAA-2100 / JCM 16839 / KCTC 5957 / BAV1).